A 409-amino-acid polypeptide reads, in one-letter code: Putative lipoate-protein ligase A (409 aa).

The 185-residue stretch at 146 to 330 (GPDNCRLLFY…RFQKTFKVDG (185 aa)) folds into the BPL/LPL catalytic domain. ATP-binding positions include arginine 188, 193-196 (GTVL), and lysine 249. Lysine 249 contributes to the (R)-lipoate binding site.

The protein belongs to the LplA family. In terms of assembly, monomer.

The enzyme catalyses L-lysyl-[lipoyl-carrier protein] + (R)-lipoate + ATP = N(6)-[(R)-lipoyl]-L-lysyl-[lipoyl-carrier protein] + AMP + diphosphate + H(+). Its pathway is protein modification; protein lipoylation via exogenous pathway; protein N(6)-(lipoyl)lysine from lipoate: step 1/2. It participates in protein modification; protein lipoylation via exogenous pathway; protein N(6)-(lipoyl)lysine from lipoate: step 2/2. Its function is as follows. Catalyzes both the ATP-dependent activation of exogenously supplied lipoate to lipoyl-AMP and the transfer of the activated lipoyl onto the lipoyl domains of lipoate-dependent enzymes. The sequence is that of Putative lipoate-protein ligase A (AIM22) from Saccharomyces cerevisiae (strain RM11-1a) (Baker's yeast).